The primary structure comprises 877 residues: Alanine--tRNA ligase (877 aa).

His565, His569, Cys667, and His671 together coordinate Zn(2+).

It belongs to the class-II aminoacyl-tRNA synthetase family. It depends on Zn(2+) as a cofactor.

It localises to the cytoplasm. The catalysed reaction is tRNA(Ala) + L-alanine + ATP = L-alanyl-tRNA(Ala) + AMP + diphosphate. In terms of biological role, catalyzes the attachment of alanine to tRNA(Ala) in a two-step reaction: alanine is first activated by ATP to form Ala-AMP and then transferred to the acceptor end of tRNA(Ala). Also edits incorrectly charged Ser-tRNA(Ala) and Gly-tRNA(Ala) via its editing domain. The polypeptide is Alanine--tRNA ligase (Acidithiobacillus ferridurans).